The chain runs to 220 residues: Ribosomal RNA large subunit methyltransferase E (220 aa).

S-adenosyl-L-methionine-binding residues include glycine 60, tryptophan 62, aspartate 92, aspartate 108, and aspartate 133. Lysine 173 (proton acceptor) is an active-site residue.

It belongs to the class I-like SAM-binding methyltransferase superfamily. RNA methyltransferase RlmE family.

The protein resides in the cytoplasm. It carries out the reaction uridine(2552) in 23S rRNA + S-adenosyl-L-methionine = 2'-O-methyluridine(2552) in 23S rRNA + S-adenosyl-L-homocysteine + H(+). Functionally, specifically methylates the uridine in position 2552 of 23S rRNA at the 2'-O position of the ribose in the fully assembled 50S ribosomal subunit. The polypeptide is Ribosomal RNA large subunit methyltransferase E (Paraburkholderia phymatum (strain DSM 17167 / CIP 108236 / LMG 21445 / STM815) (Burkholderia phymatum)).